The sequence spans 312 residues: DNA-directed RNA polymerase subunit alpha (312 aa).

The interval 1 to 229 (MLQYQIDRIE…ELFQPLATVT (229 aa)) is alpha N-terminal domain (alpha-NTD). The alpha C-terminal domain (alpha-CTD) stretch occupies residues 236 to 312 (IEPEPSAEAQ…ISIPQSRTSV (77 aa)).

Belongs to the RNA polymerase alpha chain family. As to quaternary structure, in cyanobacteria the RNAP catalytic core is composed of 2 alpha, 1 beta, 1 beta', 1 gamma and 1 omega subunit. When a sigma factor is associated with the core the holoenzyme is formed, which can initiate transcription.

The catalysed reaction is RNA(n) + a ribonucleoside 5'-triphosphate = RNA(n+1) + diphosphate. Its function is as follows. DNA-dependent RNA polymerase catalyzes the transcription of DNA into RNA using the four ribonucleoside triphosphates as substrates. The sequence is that of DNA-directed RNA polymerase subunit alpha from Synechococcus sp. (strain CC9311).